The primary structure comprises 525 residues: Probable protein kinase UbiB (525 aa).

Positions 118–500 (DFERVPVASA…QKRTNRLLQG (383 aa)) constitute a Protein kinase domain. ATP contacts are provided by residues 124–132 (VASASIAQV) and Lys150. The active-site Proton acceptor is the Asp285. Residues 501–521 (LLLFGVAVGVGAVLARAFLAL) traverse the membrane as a helical segment.

Belongs to the ABC1 family. UbiB subfamily.

It is found in the cell inner membrane. Its pathway is cofactor biosynthesis; ubiquinone biosynthesis [regulation]. In terms of biological role, is probably a protein kinase regulator of UbiI activity which is involved in aerobic coenzyme Q (ubiquinone) biosynthesis. The sequence is that of Probable protein kinase UbiB from Paraburkholderia phytofirmans (strain DSM 17436 / LMG 22146 / PsJN) (Burkholderia phytofirmans).